The primary structure comprises 98 residues: MALTKAEMAEHLFETLGINKRVAKEMVESFFEEIRGALESGEQVKLSGFGNFDLRDKNQRPGRNPKTGEDIPISARRVVTFRPGQKLKTRVEAANAGK.

The tract at residues 49–71 (FGNFDLRDKNQRPGRNPKTGEDI) is disordered.

This sequence belongs to the bacterial histone-like protein family. As to quaternary structure, heterodimer of an alpha and a beta chain.

This protein is one of the two subunits of integration host factor, a specific DNA-binding protein that functions in genetic recombination as well as in transcriptional and translational control. The protein is Integration host factor subunit alpha of Shewanella sp. (strain ANA-3).